Reading from the N-terminus, the 209-residue chain is MSETYVLKADLRTRVGKGSSRELRRNGQIPAVIYGDKQEPLAIAVSYKEIFYKIHGGGFKTTVATIEVDGKKIQVLPKDYQLDPVRDFPQHVDFLRVSAKSVVHVNVPVHFKNEEAAPGIKRGGVLNIVRHDVELIVPANAIPEALEFDLTGLEIGDSVHISAIKLPKGVTAAIQDRDFTIATIAAPAGLKSEEAASEGAAEEEAKDGE.

The interval Leu190–Glu209 is disordered. Acidic residues predominate over residues Ala200–Glu209.

It belongs to the bacterial ribosomal protein bL25 family. CTC subfamily. In terms of assembly, part of the 50S ribosomal subunit; part of the 5S rRNA/L5/L18/L25 subcomplex. Contacts the 5S rRNA. Binds to the 5S rRNA independently of L5 and L18.

Functionally, this is one of the proteins that binds to the 5S RNA in the ribosome where it forms part of the central protuberance. The polypeptide is Large ribosomal subunit protein bL25 (Brucella anthropi (strain ATCC 49188 / DSM 6882 / CCUG 24695 / JCM 21032 / LMG 3331 / NBRC 15819 / NCTC 12168 / Alc 37) (Ochrobactrum anthropi)).